A 261-amino-acid chain; its full sequence is Ribonuclease PH (261 aa).

Phosphate contacts are provided by residues Arg88 and 126-128; that span reads GTR. Positions 242-261 are disordered; that stretch reads PYPGVLPEPKNPEPKKKFGA. A compositionally biased stretch (basic and acidic residues) spans 251 to 261; it reads KNPEPKKKFGA.

The protein belongs to the RNase PH family. In terms of assembly, homohexameric ring arranged as a trimer of dimers.

It carries out the reaction tRNA(n+1) + phosphate = tRNA(n) + a ribonucleoside 5'-diphosphate. In terms of biological role, phosphorolytic 3'-5' exoribonuclease that plays an important role in tRNA 3'-end maturation. Removes nucleotide residues following the 3'-CCA terminus of tRNAs; can also add nucleotides to the ends of RNA molecules by using nucleoside diphosphates as substrates, but this may not be physiologically important. Probably plays a role in initiation of 16S rRNA degradation (leading to ribosome degradation) during starvation. The polypeptide is Ribonuclease PH (Rhodococcus erythropolis (strain PR4 / NBRC 100887)).